The following is a 197-amino-acid chain: dTTP/UTP pyrophosphatase (197 aa).

The active-site Proton acceptor is Asp70.

It belongs to the Maf family. YhdE subfamily. A divalent metal cation is required as a cofactor.

The protein localises to the cytoplasm. The catalysed reaction is dTTP + H2O = dTMP + diphosphate + H(+). It carries out the reaction UTP + H2O = UMP + diphosphate + H(+). Its function is as follows. Nucleoside triphosphate pyrophosphatase that hydrolyzes dTTP and UTP. May have a dual role in cell division arrest and in preventing the incorporation of modified nucleotides into cellular nucleic acids. The polypeptide is dTTP/UTP pyrophosphatase (yceF2) (Shigella boydii serotype 4 (strain Sb227)).